The chain runs to 760 residues: Cellulose synthase-like protein G1 (760 aa).

A run of 2 helical transmembrane segments spans residues 28-48 and 54-74; these read IYAI…VHSL and TLIT…WATT. Residues D142 and D447 contribute to the active site. The next 5 membrane-spanning stretches (helical) occupy residues 530–550, 558–578, 593–613, 656–676, and 680–700; these read IPLT…VSVF, FWLY…DFLL, LMIK…LKTL, VAIV…FCGG, and LELM…GAMV.

The protein belongs to the glycosyltransferase 2 family. Plant cellulose synthase-like G subfamily. Expressed in young seedlings, primarily in the vascular tissue.

It is found in the golgi apparatus membrane. Thought to be a Golgi-localized beta-glycan synthase that polymerize the backbones of noncellulosic polysaccharides (hemicelluloses) of plant cell wall. The protein is Cellulose synthase-like protein G1 (CSLG1) of Arabidopsis thaliana (Mouse-ear cress).